Reading from the N-terminus, the 151-residue chain is 3-dehydroquinate dehydratase (151 aa).

Tyr-24 serves as the catalytic Proton acceptor. Substrate-binding residues include Asn-76, His-82, and Asp-89. Residue His-102 is the Proton donor of the active site. Substrate contacts are provided by residues Val-103 to Ser-104 and Arg-113.

The protein belongs to the type-II 3-dehydroquinase family. As to quaternary structure, homododecamer.

The enzyme catalyses 3-dehydroquinate = 3-dehydroshikimate + H2O. The protein operates within metabolic intermediate biosynthesis; chorismate biosynthesis; chorismate from D-erythrose 4-phosphate and phosphoenolpyruvate: step 3/7. Functionally, catalyzes a trans-dehydration via an enolate intermediate. The chain is 3-dehydroquinate dehydratase from Afipia carboxidovorans (strain ATCC 49405 / DSM 1227 / KCTC 32145 / OM5) (Oligotropha carboxidovorans).